The sequence spans 482 residues: Replication factor C large subunit (482 aa).

46 to 53 (GPPGSGKT) is an ATP binding site. The segment at 420–482 (EKETPKKKKK…KKQATLDSFF (63 aa)) is disordered. A compositionally biased stretch (basic and acidic residues) spans 442 to 476 (KISEPPKEPLKEVIEETVEKTDKKEKEKKDPKKQA).

This sequence belongs to the activator 1 small subunits family. RfcL subfamily. Heteromultimer composed of small subunits (RfcS) and large subunits (RfcL).

Its function is as follows. Part of the RFC clamp loader complex which loads the PCNA sliding clamp onto DNA. In Methanococcus maripaludis (strain C7 / ATCC BAA-1331), this protein is Replication factor C large subunit.